Here is a 141-residue protein sequence, read N- to C-terminus: Nucleoside diphosphate kinase (141 aa).

Positions 11, 59, 87, 93, 104, and 114 each coordinate ATP. Residue His117 is the Pros-phosphohistidine intermediate of the active site.

The protein belongs to the NDK family. In terms of assembly, homotetramer. It depends on Mg(2+) as a cofactor.

It localises to the cytoplasm. The enzyme catalyses a 2'-deoxyribonucleoside 5'-diphosphate + ATP = a 2'-deoxyribonucleoside 5'-triphosphate + ADP. The catalysed reaction is a ribonucleoside 5'-diphosphate + ATP = a ribonucleoside 5'-triphosphate + ADP. Major role in the synthesis of nucleoside triphosphates other than ATP. The ATP gamma phosphate is transferred to the NDP beta phosphate via a ping-pong mechanism, using a phosphorylated active-site intermediate. The chain is Nucleoside diphosphate kinase from Paraburkholderia xenovorans (strain LB400).